A 616-amino-acid chain; its full sequence is Chaperone protein HscA (616 aa).

Belongs to the heat shock protein 70 family.

Its function is as follows. Chaperone involved in the maturation of iron-sulfur cluster-containing proteins. Has a low intrinsic ATPase activity which is markedly stimulated by HscB. Involved in the maturation of IscU. The protein is Chaperone protein HscA of Klebsiella pneumoniae (strain 342).